We begin with the raw amino-acid sequence, 335 residues long: Auxin-responsive protein IAA6 (335 aa).

The EAR-like (transcriptional repression) motif lies at 51-55 (LKLGL). Disordered regions lie at residues 81-102 (LSFF…GAKR), 143-180 (KKGC…VGWP), and 188-207 (NLAS…DNAN). One can recognise a PB1 domain in the interval 217 to 321 (NPLVKINMDG…TAKRLRVLRS (105 aa)).

Belongs to the Aux/IAA family. Homodimers and heterodimers. In terms of tissue distribution, highly expressed in roots. Expressed in shoots and flowers.

Its subcellular location is the nucleus. In terms of biological role, aux/IAA proteins are short-lived transcriptional factors that function as repressors of early auxin response genes at low auxin concentrations. This is Auxin-responsive protein IAA6 (IAA6) from Oryza sativa subsp. japonica (Rice).